Consider the following 195-residue polypeptide: Guanylate kinase (195 aa).

One can recognise a Guanylate kinase-like domain in the interval 12 to 191 (GLIILISGPS…TIEDIKQLIL (180 aa)). 19–26 (GPSGVGKG) provides a ligand contact to ATP.

The protein belongs to the guanylate kinase family.

It is found in the cytoplasm. It carries out the reaction GMP + ATP = GDP + ADP. Functionally, essential for recycling GMP and indirectly, cGMP. This chain is Guanylate kinase (gmk), found in Mycoplasmoides gallisepticum (strain R(low / passage 15 / clone 2)) (Mycoplasma gallisepticum).